The primary structure comprises 297 residues: ClpXP adapter protein SpxH (297 aa).

The protein belongs to the SpxH family. In terms of assembly, interacts with Spx.

The protein localises to the cytoplasm. Its function is as follows. Adapter protein required for efficient degradation of Spx by ClpXP under non-stress conditions. Interaction with Spx stabilizes Spx and exposes the C-terminus of Spx for recognition and proteolysis by ClpXP. This Bacillus cereus (strain ZK / E33L) protein is ClpXP adapter protein SpxH.